Consider the following 105-residue polypeptide: DNA-directed RNA polymerases I and III subunit RPAC2 (105 aa).

It belongs to the archaeal Rpo11/eukaryotic RPB11/RPC19 RNA polymerase subunit family. In terms of assembly, component of the RNA polymerase I (Pol I) and RNA polymerase III (Pol III) complexes consisting of at least 13 and 17 subunits, respectively.

The protein localises to the nucleus. In terms of biological role, DNA-dependent RNA polymerase catalyzes the transcription of DNA into RNA using the four ribonucleoside triphosphates as substrates. Common core component of RNA polymerases I and III which synthesize ribosomal RNA precursors and small RNAs, such as 5S rRNA and tRNAs, respectively. In Drosophila melanogaster (Fruit fly), this protein is DNA-directed RNA polymerases I and III subunit RPAC2.